Consider the following 748-residue polypeptide: Catalase-peroxidase (748 aa).

The segment at residues 92–238 (WHSAGTYRTG…LAAVQMGLIY (147 aa)) is a cross-link (tryptophyl-tyrosyl-methioninium (Trp-Tyr) (with M-264)). H93 functions as the Proton acceptor in the catalytic mechanism. A cross-link (tryptophyl-tyrosyl-methioninium (Tyr-Met) (with W-92)) is located at residues 238-264 (YVNPEGPDGNPDPLLAAKDIRDTFGRM). H279 serves as a coordination point for heme b.

It belongs to the peroxidase family. Peroxidase/catalase subfamily. As to quaternary structure, homodimer or homotetramer. Heme b is required as a cofactor. Formation of the three residue Trp-Tyr-Met cross-link is important for the catalase, but not the peroxidase activity of the enzyme.

The enzyme catalyses H2O2 + AH2 = A + 2 H2O. The catalysed reaction is 2 H2O2 = O2 + 2 H2O. In terms of biological role, bifunctional enzyme with both catalase and broad-spectrum peroxidase activity. The chain is Catalase-peroxidase from Xanthomonas campestris pv. campestris (strain 8004).